The sequence spans 1367 residues: DNA-directed RNA polymerase subunit beta' (1367 aa).

Positions 1-34 are disordered; sequence MTSTSPKSRKSSSKRKGSKKKAARSKNVIPPLSK. Residues 7–24 are compositionally biased toward basic residues; it reads KSRKSSSKRKGSKKKAAR. Residues Cys250, Cys317, Cys324, and Cys327 each coordinate Zn(2+). Positions 1306–1367 are disordered; sequence SVLDDPSDAD…LQEEGLLSDE (62 aa). Low complexity predominate over residues 1355–1367; the sequence is LEGLQEEGLLSDE.

This sequence belongs to the RNA polymerase beta' chain family. RpoC2 subfamily. In cyanobacteria the RNAP catalytic core is composed of 2 alpha, 1 beta, 1 beta', 1 gamma and 1 omega subunit. When a sigma factor is associated with the core the holoenzyme is formed, which can initiate transcription. Requires Zn(2+) as cofactor.

The enzyme catalyses RNA(n) + a ribonucleoside 5'-triphosphate = RNA(n+1) + diphosphate. In terms of biological role, DNA-dependent RNA polymerase catalyzes the transcription of DNA into RNA using the four ribonucleoside triphosphates as substrates. In Prochlorococcus marinus (strain SARG / CCMP1375 / SS120), this protein is DNA-directed RNA polymerase subunit beta'.